The sequence spans 625 residues: Glutamyl-tRNA(Gln) amidotransferase subunit E (625 aa).

Belongs to the GatB/GatE family. GatE subfamily. Heterodimer of GatD and GatE.

It catalyses the reaction L-glutamyl-tRNA(Gln) + L-glutamine + ATP + H2O = L-glutaminyl-tRNA(Gln) + L-glutamate + ADP + phosphate + H(+). Functionally, allows the formation of correctly charged Gln-tRNA(Gln) through the transamidation of misacylated Glu-tRNA(Gln) in organisms which lack glutaminyl-tRNA synthetase. The reaction takes place in the presence of glutamine and ATP through an activated gamma-phospho-Glu-tRNA(Gln). The GatDE system is specific for glutamate and does not act on aspartate. The chain is Glutamyl-tRNA(Gln) amidotransferase subunit E from Caldivirga maquilingensis (strain ATCC 700844 / DSM 13496 / JCM 10307 / IC-167).